The primary structure comprises 137 residues: uncharacterized protein (137 aa).

A helical transmembrane segment spans residues 20–42 (TVLAFKGEGALALAGLLVMAAVA).

The protein resides in the host membrane. This is an uncharacterized protein from Dryophytes versicolor (chameleon treefrog).